The following is an 86-amino-acid chain: Bacteriocin thailandicin (86 aa).

Positions Leu23–Trp86 form a cross-link, cyclopeptide (Leu-Trp).

The protein localises to the secreted. In terms of biological role, cyclopeptide antibiotic with bacteriolytic activity against the Gram-positive bacteria S.aureus and S.thermophilus, and lower activity against the Gram-negative bacteria E.coli and P.aeruginosa. The polypeptide is Bacteriocin thailandicin (Enterococcus thailandicus).